The following is a 287-amino-acid chain: MSDINIKIGLAEMLKGGVIMDVVNAEQAEIAQQAGAVAVMALERVPADIRKDGGIARMSDPKLIKEIMSVVSIPVMAKARIGHFVEAQILESLGVDFIDESEVLTPADELNHIDKDSFKVPFVCGCTNLGEALRRIGEGAALIRTKGEAGTGNIVEAVRQLRQVNKDINYIKNADKSELMAIAKNLQAPYDLVTYVHKNGKLPVPNFSAGGVATPADAALMMQLGAESVFVGSGIFKSADPLKRARAIVSAVTYYNDAKILAEVSEDLGEPMTGINCDFEKFSQRGW.

Asp-21 contributes to the D-ribose 5-phosphate binding site. Lys-78 functions as the Schiff-base intermediate with D-ribose 5-phosphate in the catalytic mechanism. Residue Gly-150 participates in D-ribose 5-phosphate binding. A D-glyceraldehyde 3-phosphate-binding site is contributed by Arg-162. Residues Gly-211 and 232–233 (GS) contribute to the D-ribose 5-phosphate site.

The protein belongs to the PdxS/SNZ family. In terms of assembly, in the presence of PdxT, forms a dodecamer of heterodimers.

The catalysed reaction is aldehydo-D-ribose 5-phosphate + D-glyceraldehyde 3-phosphate + L-glutamine = pyridoxal 5'-phosphate + L-glutamate + phosphate + 3 H2O + H(+). It participates in cofactor biosynthesis; pyridoxal 5'-phosphate biosynthesis. Functionally, catalyzes the formation of pyridoxal 5'-phosphate from ribose 5-phosphate (RBP), glyceraldehyde 3-phosphate (G3P) and ammonia. The ammonia is provided by the PdxT subunit. Can also use ribulose 5-phosphate and dihydroxyacetone phosphate as substrates, resulting from enzyme-catalyzed isomerization of RBP and G3P, respectively. In Francisella tularensis subsp. tularensis (strain FSC 198), this protein is Pyridoxal 5'-phosphate synthase subunit PdxS.